The primary structure comprises 321 residues: Methionyl-tRNA formyltransferase (321 aa).

113–116 (SILP) contacts (6S)-5,6,7,8-tetrahydrofolate.

The protein belongs to the Fmt family.

The enzyme catalyses L-methionyl-tRNA(fMet) + (6R)-10-formyltetrahydrofolate = N-formyl-L-methionyl-tRNA(fMet) + (6S)-5,6,7,8-tetrahydrofolate + H(+). Attaches a formyl group to the free amino group of methionyl-tRNA(fMet). The formyl group appears to play a dual role in the initiator identity of N-formylmethionyl-tRNA by promoting its recognition by IF2 and preventing the misappropriation of this tRNA by the elongation apparatus. The chain is Methionyl-tRNA formyltransferase from Pseudoalteromonas translucida (strain TAC 125).